Consider the following 380-residue polypeptide: Carbamoyl phosphate synthase small chain (380 aa).

The segment at 1–184 is CPSase; the sequence is MTTSTRGAHR…EAYVVPAIGE (184 aa). Positions 55, 236, and 238 each coordinate L-glutamine. The Glutamine amidotransferase type-1 domain occupies 188 to 380; it reads TVAAVDLGIK…FVNLMEGQRA (193 aa). The active-site Nucleophile is the Cys-264. L-glutamine is bound by residues Phe-265, Gln-268, Asn-306, Gly-308, and Phe-309. Catalysis depends on residues His-354 and Glu-356.

This sequence belongs to the CarA family. As to quaternary structure, composed of two chains; the small (or glutamine) chain promotes the hydrolysis of glutamine to ammonia, which is used by the large (or ammonia) chain to synthesize carbamoyl phosphate. Tetramer of heterodimers (alpha,beta)4.

It carries out the reaction hydrogencarbonate + L-glutamine + 2 ATP + H2O = carbamoyl phosphate + L-glutamate + 2 ADP + phosphate + 2 H(+). It catalyses the reaction L-glutamine + H2O = L-glutamate + NH4(+). The protein operates within amino-acid biosynthesis; L-arginine biosynthesis; carbamoyl phosphate from bicarbonate: step 1/1. Its pathway is pyrimidine metabolism; UMP biosynthesis via de novo pathway; (S)-dihydroorotate from bicarbonate: step 1/3. Its function is as follows. Small subunit of the glutamine-dependent carbamoyl phosphate synthetase (CPSase). CPSase catalyzes the formation of carbamoyl phosphate from the ammonia moiety of glutamine, carbonate, and phosphate donated by ATP, constituting the first step of 2 biosynthetic pathways, one leading to arginine and/or urea and the other to pyrimidine nucleotides. The small subunit (glutamine amidotransferase) binds and cleaves glutamine to supply the large subunit with the substrate ammonia. The sequence is that of Carbamoyl phosphate synthase small chain from Streptomyces coelicolor (strain ATCC BAA-471 / A3(2) / M145).